A 65-amino-acid polypeptide reads, in one-letter code: Photosystem II reaction center protein J (65 aa).

The segment covering 1 to 18 has biased composition (basic and acidic residues); it reads MSSKLKGPDGRLPDRLPD. The disordered stretch occupies residues 1–21; it reads MSSKLKGPDGRLPDRLPDGRP. The helical transmembrane segment at 36 to 56 threads the bilayer; the sequence is LWLVATAGGIAVIFVLGIFFY.

Belongs to the PsbJ family. As to quaternary structure, PSII is composed of 1 copy each of membrane proteins PsbA, PsbB, PsbC, PsbD, PsbE, PsbF, PsbH, PsbI, PsbJ, PsbK, PsbL, PsbM, PsbT, PsbX, PsbY, Psb30/Ycf12, peripheral proteins PsbO, CyanoQ (PsbQ), PsbU, PsbV and a large number of cofactors. It forms dimeric complexes.

It is found in the cellular thylakoid membrane. One of the components of the core complex of photosystem II (PSII). PSII is a light-driven water:plastoquinone oxidoreductase that uses light energy to abstract electrons from H(2)O, generating O(2) and a proton gradient subsequently used for ATP formation. It consists of a core antenna complex that captures photons, and an electron transfer chain that converts photonic excitation into a charge separation. This Prochlorococcus marinus (strain SARG / CCMP1375 / SS120) protein is Photosystem II reaction center protein J.